We begin with the raw amino-acid sequence, 82 residues long: UPF0180 protein BC_1394 (82 aa).

This sequence belongs to the UPF0180 family.

This is UPF0180 protein BC_1394 from Bacillus cereus (strain ATCC 14579 / DSM 31 / CCUG 7414 / JCM 2152 / NBRC 15305 / NCIMB 9373 / NCTC 2599 / NRRL B-3711).